The primary structure comprises 121 residues: Small ribosomal subunit protein bS6 (121 aa).

The protein belongs to the bacterial ribosomal protein bS6 family.

In terms of biological role, binds together with bS18 to 16S ribosomal RNA. The sequence is that of Small ribosomal subunit protein bS6 from Rickettsia conorii (strain ATCC VR-613 / Malish 7).